Here is a 396-residue protein sequence, read N- to C-terminus: 1-deoxy-D-xylulose 5-phosphate reductoisomerase (396 aa).

Thr-10, Gly-11, Ser-12, Ile-13, and Asn-123 together coordinate NADPH. Lys-124 serves as a coordination point for 1-deoxy-D-xylulose 5-phosphate. Glu-125 contacts NADPH. Asp-149 is a binding site for Mn(2+). 1-deoxy-D-xylulose 5-phosphate-binding residues include Ser-150, Glu-151, Ser-185, and His-208. Mn(2+) is bound at residue Glu-151. Gly-214 lines the NADPH pocket. 1-deoxy-D-xylulose 5-phosphate contacts are provided by Ser-221, Asn-226, Lys-227, and Glu-230. Glu-230 provides a ligand contact to Mn(2+).

It belongs to the DXR family. It depends on Mg(2+) as a cofactor. The cofactor is Mn(2+).

The enzyme catalyses 2-C-methyl-D-erythritol 4-phosphate + NADP(+) = 1-deoxy-D-xylulose 5-phosphate + NADPH + H(+). It functions in the pathway isoprenoid biosynthesis; isopentenyl diphosphate biosynthesis via DXP pathway; isopentenyl diphosphate from 1-deoxy-D-xylulose 5-phosphate: step 1/6. Functionally, catalyzes the NADPH-dependent rearrangement and reduction of 1-deoxy-D-xylulose-5-phosphate (DXP) to 2-C-methyl-D-erythritol 4-phosphate (MEP). This Shewanella sp. (strain MR-7) protein is 1-deoxy-D-xylulose 5-phosphate reductoisomerase.